A 183-amino-acid polypeptide reads, in one-letter code: Oleosin Bn-V (183 aa).

Residues 1–47 (PARTHHDITTRDQYPLISRDRDQYGMIGRDQYNMSGQNYSKSRQIAK) form a polar region. 2 repeats span residues 11-20 (RDQYPLISRD) and 21-30 (RDQYGMIGRD). Residues 48–119 (ATTAVTAGDS…AAITVFSWIY (72 aa)) form a hydrophobic region. The next 2 helical transmembrane spans lie at 57–77 (SLLV…IVAT) and 99–119 (TGFL…SWIY). A disordered region spans residues 154–183 (YGQQHTGEEHDRDRDHRTDRDRTRGTQHTT). The segment covering 159–177 (TGEEHDRDRDHRTDRDRTR) has biased composition (basic and acidic residues).

This sequence belongs to the oleosin family.

Its subcellular location is the lipid droplet. The protein resides in the membrane. May have a structural role to stabilize the lipid body during desiccation of the seed by preventing coalescence of the oil. Probably interacts with both lipid and phospholipid moieties of lipid bodies. May also provide recognition signals for specific lipase anchorage in lipolysis during seedling growth. This is Oleosin Bn-V from Brassica napus (Rape).